The following is a 115-amino-acid chain: Somatostatin-2 (115 aa).

An N-terminal signal peptide occupies residues Met-1–Ala-18. The propeptide occupies Ile-19 to Arg-87. Cysteines 104 and 115 form a disulfide.

It belongs to the somatostatin family.

Its subcellular location is the secreted. Functionally, somatostatin inhibits the release of somatotropin. This chain is Somatostatin-2 (sst2), found in Oncorhynchus mykiss (Rainbow trout).